Reading from the N-terminus, the 765-residue chain is Probable beta-glucosidase M (765 aa).

An N-terminal signal peptide occupies residues 1-19; it reads MHSISALLSLLGGLALSSA. Asn-24, Asn-71, Asn-93, Asn-126, and Asn-258 each carry an N-linked (GlcNAc...) asparagine glycan. Asp-286 is a catalytic residue. Residues Asn-314, Asn-321, Asn-432, Asn-519, Asn-541, and Asn-647 are each glycosylated (N-linked (GlcNAc...) asparagine).

Belongs to the glycosyl hydrolase 3 family.

The protein resides in the secreted. The enzyme catalyses Hydrolysis of terminal, non-reducing beta-D-glucosyl residues with release of beta-D-glucose.. The protein operates within glycan metabolism; cellulose degradation. Beta-glucosidases are one of a number of cellulolytic enzymes involved in the degradation of cellulosic biomass. Catalyzes the last step releasing glucose from the inhibitory cellobiose. This Aspergillus niger (strain ATCC MYA-4892 / CBS 513.88 / FGSC A1513) protein is Probable beta-glucosidase M (bglM).